We begin with the raw amino-acid sequence, 962 residues long: MASNSTKSFLADAGYGEQELDANSALMELDKGLRSGKLGEQCEAVVRFPRLFQKYPFPILINSAFLKLADVFRVGNNFLRLCVLKVTQQSEKHLEKILNVDEFVKRIFSVIHSNDPVARAITLRMLGSLASIIPERKNAHHSIRQSLDSHDNVEVEAAVFAAANFSAQSKDFAVGICNKISEMIQGLATPVDLKLKLIPILQHMHHDAILASSARQLLQQLVTSYPSTKMVIVSLHTFTLLAASSLVDTPKQIQLLLQYLKNDPRKAVKRLAIQDLKLLANKTPHTWSRENIQALCECALQTPYDSLKLGMLSVLSTLSGTIAIKHYFSIVPGNVSSSPRSSDLVKLAQECCYHNNRGIAAHGVRVLTNITVSCQEKDLLALEQDAVFGLESLLVLCSQDDSPGAQATLKIALNCMVKLAKGRPHLSQSVVETLLTQLHSAQDAARILMCHCLAAIAMQLPVLGDGMLGDLMELYKVIGRSATDKQQELLVSLATVIFVASQKALSVESKAVIKQQLESVSNGWTVYRIARQASRMGNHDMAKELYQSLLTQVASEHFYFWLNSLKEFSHAEQCLTGLQEENYSSALSCIAESLKFYHKGIASLTAASTPLNPLSFQCEFVKLRIDLLQAFSQLICTCNSLKTSPPPAIATTIAMTLGNDLQRCGRISNQMKQSMEEFRSLASRYGDLYQASFDADSATLRNVELQQQSCLLISHAIEALILDPESASFQEYGSTGTAHADSEYERRMMSVYNHVLEEVESLNRKYTPVSYMHTACLCNAIIALLKVPLSFQRYFFQKLQSTSIKLALSPSPRNPAEPIAVQNNQQLALKVEGVVQHGSKPGLFRKIQSVCLNVSSTLQSKSGQDYKIPIDNMTNEMEQRVEPHNDYFSTQFLLNFAILGTHNITVESSVKDANGIVWKTGPRTTIFVKSLEDPYSQQIRLQQQQAQQPLQQQQQRNAYTRF.

2 positions are modified to phosphoserine: Ser338 and Ser809.

It belongs to the Integrator subunit 7 family. In terms of assembly, component of the Integrator complex, composed of core subunits INTS1, INTS2, INTS3, INTS4, INTS5, INTS6, INTS7, INTS8, INTS9/RC74, INTS10, INTS11/CPSF3L, INTS12, INTS13, INTS14 and INTS15. The core complex associates with protein phosphatase 2A subunits PPP2CA and PPP2R1A, to form the Integrator-PP2A (INTAC) complex. Interacts with NABP2.

The protein resides in the nucleus. The protein localises to the chromosome. Its subcellular location is the cytoplasm. Functionally, component of the integrator complex, a multiprotein complex that terminates RNA polymerase II (Pol II) transcription in the promoter-proximal region of genes. The integrator complex provides a quality checkpoint during transcription elongation by driving premature transcription termination of transcripts that are unfavorably configured for transcriptional elongation: the complex terminates transcription by (1) catalyzing dephosphorylation of the C-terminal domain (CTD) of Pol II subunit POLR2A/RPB1 and SUPT5H/SPT5, (2) degrading the exiting nascent RNA transcript via endonuclease activity and (3) promoting the release of Pol II from bound DNA. The integrator complex is also involved in terminating the synthesis of non-coding Pol II transcripts, such as enhancer RNAs (eRNAs), small nuclear RNAs (snRNAs), telomerase RNAs and long non-coding RNAs (lncRNAs). May be not involved in the recruitment of cytoplasmic dynein to the nuclear envelope by different components of the INT complex. Plays a role in DNA damage response (DDR) signaling during the S phase. In Homo sapiens (Human), this protein is Integrator complex subunit 7.